We begin with the raw amino-acid sequence, 85 residues long: Large ribosomal subunit protein bL27 (85 aa).

The disordered stretch occupies residues 1 to 21 (MAHKKAGGSTRNGRDSESKRL).

The protein belongs to the bacterial ribosomal protein bL27 family.

This Ectopseudomonas mendocina (strain ymp) (Pseudomonas mendocina) protein is Large ribosomal subunit protein bL27.